A 168-amino-acid polypeptide reads, in one-letter code: Small ribosomal subunit protein uS8 (168 aa).

A not found in other S8 sequences region spans residues 59 to 93 (EEFKKMKELAEKSPNPKMRRYLQQLIDYNKGTQYP).

This sequence belongs to the universal ribosomal protein uS8 family. As to quaternary structure, part of the 30S ribosomal subunit. Contacts proteins S5 and S12.

One of the primary rRNA binding proteins, it binds directly to 16S rRNA central domain where it helps coordinate assembly of the platform of the 30S subunit. The polypeptide is Small ribosomal subunit protein uS8 (Aquifex pyrophilus).